A 624-amino-acid chain; its full sequence is Membrane protein insertase YidC (624 aa).

A helical membrane pass occupies residues 8-28 (MIIAIALSLAVLLGWNYFVTA). The segment at 36–95 (QQQAAQVNPSQGVNPSQGVDPSQGVNASPSPKEGGPSAPVPGTLPGAAGGSPQAALARDE) is disordered. The span at 43–64 (NPSQGVNPSQGVDPSQGVNASP) shows a compositional bias: polar residues. 5 consecutive transmembrane segments (helical) span residues 370–390 (FDLL…FKAL), 396–416 (LFGN…LFFL), 470–490 (WPVL…FVTI), 526–542 (LLHL…TMFL), and 559–579 (FTFM…GLVI).

Belongs to the OXA1/ALB3/YidC family. Type 1 subfamily. As to quaternary structure, interacts with the Sec translocase complex via SecD. Specifically interacts with transmembrane segments of nascent integral membrane proteins during membrane integration.

It localises to the cell inner membrane. Required for the insertion and/or proper folding and/or complex formation of integral membrane proteins into the membrane. Involved in integration of membrane proteins that insert both dependently and independently of the Sec translocase complex, as well as at least some lipoproteins. Aids folding of multispanning membrane proteins. The polypeptide is Membrane protein insertase YidC (Methylobacterium sp. (strain 4-46)).